A 456-amino-acid chain; its full sequence is Bifunctional protein GlmU (456 aa).

The pyrophosphorylase stretch occupies residues 1–229; the sequence is MLNSAMSVVI…ISETDGVNNR (229 aa). Residues 11–14, K25, Q76, 81–82, 103–105, G140, E154, N169, and N227 each bind UDP-N-acetyl-alpha-D-glucosamine; these read LAAG, GT, and YGD. D105 contacts Mg(2+). N227 provides a ligand contact to Mg(2+). The interval 230-250 is linker; sequence LQLSRLERIYQAEQAEKLLLS. Residues 251 to 456 are N-acetyltransferase; that stretch reads GVMLRDPARF…QGWQRPVKKK (206 aa). Residues R333 and K351 each coordinate UDP-N-acetyl-alpha-D-glucosamine. H363 (proton acceptor) is an active-site residue. UDP-N-acetyl-alpha-D-glucosamine-binding residues include Y366 and N377. Acetyl-CoA contacts are provided by residues A380, 386-387, S405, A423, and R440; that span reads NY.

This sequence in the N-terminal section; belongs to the N-acetylglucosamine-1-phosphate uridyltransferase family. The protein in the C-terminal section; belongs to the transferase hexapeptide repeat family. As to quaternary structure, homotrimer. Requires Mg(2+) as cofactor.

The protein localises to the cytoplasm. The enzyme catalyses alpha-D-glucosamine 1-phosphate + acetyl-CoA = N-acetyl-alpha-D-glucosamine 1-phosphate + CoA + H(+). The catalysed reaction is N-acetyl-alpha-D-glucosamine 1-phosphate + UTP + H(+) = UDP-N-acetyl-alpha-D-glucosamine + diphosphate. It functions in the pathway nucleotide-sugar biosynthesis; UDP-N-acetyl-alpha-D-glucosamine biosynthesis; N-acetyl-alpha-D-glucosamine 1-phosphate from alpha-D-glucosamine 6-phosphate (route II): step 2/2. The protein operates within nucleotide-sugar biosynthesis; UDP-N-acetyl-alpha-D-glucosamine biosynthesis; UDP-N-acetyl-alpha-D-glucosamine from N-acetyl-alpha-D-glucosamine 1-phosphate: step 1/1. Its pathway is bacterial outer membrane biogenesis; LPS lipid A biosynthesis. Catalyzes the last two sequential reactions in the de novo biosynthetic pathway for UDP-N-acetylglucosamine (UDP-GlcNAc). The C-terminal domain catalyzes the transfer of acetyl group from acetyl coenzyme A to glucosamine-1-phosphate (GlcN-1-P) to produce N-acetylglucosamine-1-phosphate (GlcNAc-1-P), which is converted into UDP-GlcNAc by the transfer of uridine 5-monophosphate (from uridine 5-triphosphate), a reaction catalyzed by the N-terminal domain. This is Bifunctional protein GlmU from Salmonella agona (strain SL483).